The following is a 66-amino-acid chain: Large ribosomal subunit protein bL35 (66 aa).

Basic residues predominate over residues 1-14 (MPKMKTKSAAKKRF). Residues 1–34 (MPKMKTKSAAKKRFSMTATGKVKAGPAGKRHGMI) form a disordered region.

It belongs to the bacterial ribosomal protein bL35 family.

The polypeptide is Large ribosomal subunit protein bL35 (Paracoccus denitrificans (strain Pd 1222)).